Here is a 608-residue protein sequence, read N- to C-terminus: MFDSKAFLKNVPHDPGVYRMFDKTDTVIYVGKAKDLKKRLSSYFRPNLSSKKTEALVASITRIETTITTSETEALLLEHNYIKTFQPRYNVLLRDDKSYPYILLTKERHPRIAAYRGAKKIQGEYFGPYPHAGAVRETLSLLQKLFPIRQCENSVYKNRSRPCLQYQIGRCCAPCVAGYVTDEEYQAQVEYARLFLQGKDQQVLDHLIAKMETASRALDFENAARFRDQIQAVRAVIEKQFVSNDRLDDMDIISIAYRHGVACVQVLFIRQGKVLGNRSYFPKVPANTDLSELTATFVGQFYLQAHQGRTVPNSIVVDHKLEAKEEIEQLLSEQAGRKVSIQDNAKGSKSKYLSLAQMNAKAALTLKLKESTLISERYRALRELLDMDKINRMECFDISHTMGEQTIASCVVFNDAGPFKSEYRRFNIEGITGGDDYAAMEQALKKRYDRDLTPEKIPDIIFIDGGKGQLNRALKAFGELNVKWDKNRPHLIGIAKGVDRRAGQETLILSKTGREVNLDPDNLALHLIQHIRDESHNHAISGHRKKRQKAFTQSGLETIEGVGPKRRQALLKYLGGMQGVKNATLEEIASVPGISRALAEIIFETLKH.

Positions 13-91 constitute a GIY-YIG domain; that stretch reads HDPGVYRMFD…IKTFQPRYNV (79 aa). In terms of domain architecture, UVR spans 201 to 236; it reads QQVLDHLIAKMETASRALDFENAARFRDQIQAVRAV.

It belongs to the UvrC family. As to quaternary structure, interacts with UvrB in an incision complex.

The protein localises to the cytoplasm. Functionally, the UvrABC repair system catalyzes the recognition and processing of DNA lesions. UvrC both incises the 5' and 3' sides of the lesion. The N-terminal half is responsible for the 3' incision and the C-terminal half is responsible for the 5' incision. This chain is UvrABC system protein C, found in Actinobacillus succinogenes (strain ATCC 55618 / DSM 22257 / CCUG 43843 / 130Z).